The following is a 342-amino-acid chain: Isopentenyl-diphosphate delta-isomerase (342 aa).

11–12 (RK) contacts substrate. Residues Ser-68, 69 to 71 (SMT), Ser-99, and Asn-128 each bind FMN. 99–101 (SQR) provides a ligand contact to substrate. Residue Gln-162 participates in substrate binding. Glu-163 contacts Mg(2+). Residues Lys-194, Ser-219, Thr-224, 275 to 277 (GVR), and 296 to 297 (AK) each bind FMN.

It belongs to the IPP isomerase type 2 family. As to quaternary structure, homooctamer. Dimer of tetramers. FMN serves as cofactor. Requires NADPH as cofactor. Mg(2+) is required as a cofactor.

The protein localises to the cytoplasm. The catalysed reaction is isopentenyl diphosphate = dimethylallyl diphosphate. In terms of biological role, involved in the biosynthesis of isoprenoids. Catalyzes the 1,3-allylic rearrangement of the homoallylic substrate isopentenyl (IPP) to its allylic isomer, dimethylallyl diphosphate (DMAPP). In Legionella pneumophila (strain Corby), this protein is Isopentenyl-diphosphate delta-isomerase.